The following is a 393-amino-acid chain: S-adenosylmethionine synthase (393 aa).

Glutamate 9 lines the Mg(2+) pocket. Histidine 15 provides a ligand contact to ATP. Glutamate 43 serves as a coordination point for K(+). Glutamate 56 and glutamine 99 together coordinate L-methionine. ATP-binding positions include 167–169, 235–238, aspartate 246, 252–253, alanine 269, lysine 273, and lysine 277; these read DGK, SGRF, and RK. Aspartate 246 is an L-methionine binding site. Lysine 277 provides a ligand contact to L-methionine.

The protein belongs to the AdoMet synthase family. Homotetramer. Mn(2+) serves as cofactor. Mg(2+) is required as a cofactor. The cofactor is Co(2+). Requires K(+) as cofactor.

The protein resides in the cytoplasm. The enzyme catalyses L-methionine + ATP + H2O = S-adenosyl-L-methionine + phosphate + diphosphate. It functions in the pathway amino-acid biosynthesis; S-adenosyl-L-methionine biosynthesis; S-adenosyl-L-methionine from L-methionine: step 1/1. Functionally, catalyzes the formation of S-adenosylmethionine from methionine and ATP. The reaction comprises two steps that are both catalyzed by the same enzyme: formation of S-adenosylmethionine (AdoMet) and triphosphate, and subsequent hydrolysis of the triphosphate. The polypeptide is S-adenosylmethionine synthase (SAM) (Camellia sinensis (Tea plant)).